Here is a 250-residue protein sequence, read N- to C-terminus: Triosephosphate isomerase (250 aa).

9-11 (NWK) contacts substrate. H96 functions as the Electrophile in the catalytic mechanism. The active-site Proton acceptor is E168. Residues G174, S216, and 237–238 (GG) each bind substrate.

The protein belongs to the triosephosphate isomerase family. As to quaternary structure, homodimer.

Its subcellular location is the cytoplasm. The catalysed reaction is D-glyceraldehyde 3-phosphate = dihydroxyacetone phosphate. It participates in carbohydrate biosynthesis; gluconeogenesis. Its pathway is carbohydrate degradation; glycolysis; D-glyceraldehyde 3-phosphate from glycerone phosphate: step 1/1. Its function is as follows. Involved in the gluconeogenesis. Catalyzes stereospecifically the conversion of dihydroxyacetone phosphate (DHAP) to D-glyceraldehyde-3-phosphate (G3P). This chain is Triosephosphate isomerase, found in Leptospira interrogans serogroup Icterohaemorrhagiae serovar Lai (strain 56601).